A 45-amino-acid polypeptide reads, in one-letter code: Lysis protein for colicin E1* (45 aa).

Positions 1 to 17 (MRKRFFVGIFAINLLVG) are cleaved as a signal peptide. Cys-18 is lipidated: N-palmitoyl cysteine. Residue Cys-18 is the site of S-diacylglycerol cysteine attachment.

Its subcellular location is the cell outer membrane. In terms of biological role, lysis proteins are required for both colicin release and partial cell lysis. The chain is Lysis protein for colicin E1* (kil) from Shigella sonnei.